Reading from the N-terminus, the 191-residue chain is Putative glutathione-dependent formaldehyde-activating enzyme (191 aa).

Positions 20–166 (FAGGNLYCKC…FKAVGLETYD (147 aa)) constitute a CENP-V/GFA domain. Zn(2+) contacts are provided by Cys-27, Cys-29, Cys-48, Cys-50, Cys-53, Cys-95, and Cys-98.

Belongs to the Gfa family. The cofactor is Zn(2+).

It carries out the reaction S-(hydroxymethyl)glutathione = glutathione + formaldehyde. It participates in one-carbon metabolism; formaldehyde degradation; formate from formaldehyde (glutathione route): step 1/3. In terms of biological role, catalyzes the condensation of formaldehyde and glutathione to S-hydroxymethylglutathione. The protein is Putative glutathione-dependent formaldehyde-activating enzyme of Aspergillus terreus (strain NIH 2624 / FGSC A1156).